Here is a 484-residue protein sequence, read N- to C-terminus: Phospholipase A1-Ialpha2, chloroplastic (484 aa).

A chloroplast-targeting transit peptide spans M1 to V63. The short motif at G295–G299 is the GXSXG element. The active-site Acyl-ester intermediate is the S297. Catalysis depends on charge relay system residues D360 and H411.

Belongs to the AB hydrolase superfamily. Lipase family. Ubiquitous. Highest expression in flowers and leaves.

The protein resides in the plastid. It localises to the chloroplast. It is found in the plastoglobule. It catalyses the reaction a 1,2-diacyl-3-O-[alpha-D-galactosyl-(1-&gt;6)-beta-D-galactosyl]-sn-glycerol + H2O = acyl-3-O-[alpha-D-galactosyl-(1-&gt;6)-beta-D-galactosyl]-sn-glycerol + a fatty acid + H(+). The enzyme catalyses a 1,2-diacyl-3-O-(beta-D-galactosyl)-sn-glycerol + H2O = an acyl-3-O-(beta-D-galactosyl)-sn-glycerol + a fatty acid + H(+). Acylhydrolase that catalyzes the hydrolysis of phosphatidylcholine at the sn-1 position. Has a strong galactolipase activity toward monogalactosyldiacylglycerol (MGDG) and digalactosyldiacylglycerol (DGDG). Low triacylglycerol (TAG) lipase activity. Plays a role in plant growth and in leaf senescence. The chain is Phospholipase A1-Ialpha2, chloroplastic from Arabidopsis thaliana (Mouse-ear cress).